The sequence spans 763 residues: Glycerophosphodiester phosphodiesterase GDPDL1 (763 aa).

The signal sequence occupies residues 1-35 (MNSRPSNPTKLVIRSSTLLFCGVVLIHLFAAQIDA). Topologically, residues 36–744 (QRSTSRWQTL…STIAQAPSGQ (709 aa)) are extracellular. The 301-residue stretch at 50–350 (PLVIARGGFS…DFPITASAAV (301 aa)) folds into the GP-PDE 1 domain. Asn-105, Asn-192, Asn-248, Asn-257, Asn-315, Asn-359, Asn-430, Asn-534, Asn-547, and Asn-654 each carry an N-linked (GlcNAc...) asparagine glycan. Residues 366-668 (FLVISKDGAS…EFPFTAARYK (303 aa)) enclose the GP-PDE 2 domain. Residues 745–762 (TRLKLSLLLSVFFLSLLL) form a helical membrane-spanning segment. Residue Leu-763 is a topological domain, cytoplasmic.

This sequence belongs to the glycerophosphoryl diester phosphodiesterase family. Ca(2+) is required as a cofactor. In terms of tissue distribution, expressed in rosette and cauline leaves, stems, flowers and siliques.

It localises to the cell membrane. The enzyme catalyses a sn-glycero-3-phosphodiester + H2O = an alcohol + sn-glycerol 3-phosphate + H(+). Hydrolyzes glycerolphosphoglycerol, glycerophosphocholine and glycerophosphoethanolamine in vitro. This is Glycerophosphodiester phosphodiesterase GDPDL1 from Arabidopsis thaliana (Mouse-ear cress).